Here is a 911-residue protein sequence, read N- to C-terminus: Probable 2-oxoadipate dehydrogenase complex component E1 homolog (911 aa).

Belongs to the alpha-ketoglutarate dehydrogenase family. It depends on thiamine diphosphate as a cofactor.

The protein localises to the mitochondrion. The enzyme catalyses N(6)-[(R)-lipoyl]-L-lysyl-[protein] + 2-oxoadipate + H(+) = N(6)-[(R)-S(8)-glutaryldihydrolipoyl]-L-lysyl-[protein] + CO2. Its function is as follows. 2-oxoadipate dehydrogenase (E1a) component of the 2-oxoadipate dehydrogenase complex (OADHC). Participates in the first step, rate limiting for the overall conversion of 2-oxoadipate (alpha-ketoadipate) to glutaryl-CoA and CO(2) catalyzed by the whole OADHC. Catalyzes the irreversible decarboxylation of 2-oxoadipate via the thiamine diphosphate (ThDP) cofactor and subsequent transfer of the decarboxylated acyl intermediate on an oxidized dihydrolipoyl group that is covalently amidated to the E2 enzyme (dihydrolipoyllysine-residue succinyltransferase or DLST). The polypeptide is Probable 2-oxoadipate dehydrogenase complex component E1 homolog (Caenorhabditis elegans).